The sequence spans 270 residues: Triosephosphate isomerase (270 aa).

27-29 (NWK) contacts substrate. Catalysis depends on H114, which acts as the Electrophile. E184 (proton acceptor) is an active-site residue. Residues G190, S230, and 251-252 (GG) each bind substrate.

This sequence belongs to the triosephosphate isomerase family. In terms of assembly, homodimer.

Its subcellular location is the cytoplasm. The enzyme catalyses D-glyceraldehyde 3-phosphate = dihydroxyacetone phosphate. Its pathway is carbohydrate biosynthesis; gluconeogenesis. It participates in carbohydrate degradation; glycolysis; D-glyceraldehyde 3-phosphate from glycerone phosphate: step 1/1. Functionally, involved in the gluconeogenesis. Catalyzes stereospecifically the conversion of dihydroxyacetone phosphate (DHAP) to D-glyceraldehyde-3-phosphate (G3P). The sequence is that of Triosephosphate isomerase from Chlamydia muridarum (strain MoPn / Nigg).